The chain runs to 178 residues: Deoxyuridine 5'-triphosphate nucleotidohydrolase (178 aa).

This sequence belongs to the dUTPase family. It depends on Mg(2+) as a cofactor.

The catalysed reaction is dUTP + H2O = dUMP + diphosphate + H(+). It functions in the pathway pyrimidine metabolism; dUMP biosynthesis; dUMP from dCTP (dUTP route): step 2/2. This enzyme is involved in nucleotide metabolism: it produces dUMP, the immediate precursor of thymidine nucleotides and it decreases the intracellular concentration of dUTP so that uracil cannot be incorporated into DNA. The protein is Deoxyuridine 5'-triphosphate nucleotidohydrolase of Fowl adenovirus A serotype 1 (strain CELO / Phelps) (FAdV-1).